The chain runs to 702 residues: 1,4-alpha-glucan-branching enzyme (702 aa).

N-acetylalanine is present on A2. Substrate-binding positions include 62–63 (NE) and 91–93 (WAP). W107 lines the (1,4-alpha-D-glucosyl)n pocket. Residue 118–121 (DYGK) participates in substrate binding. K143 contributes to the (1,4-alpha-D-glucosyl)n binding site. Y173 bears the Phosphotyrosine mark. 333 to 336 (EILR) provides a ligand contact to substrate. The active-site Nucleophile is D357. E412 (proton donor) is an active-site residue.

This sequence belongs to the glycosyl hydrolase 13 family. GlgB subfamily. In terms of assembly, monomer.

It catalyses the reaction Transfers a segment of a (1-&gt;4)-alpha-D-glucan chain to a primary hydroxy group in a similar glucan chain.. It participates in glycan biosynthesis; glycogen biosynthesis. Functionally, glycogen-branching enzyme participates in the glycogen biosynthetic process along with glycogenin and glycogen synthase. Generates alpha-1,6-glucosidic branches from alpha-1,4-linked glucose chains, to increase solubility of the glycogen polymer. In Homo sapiens (Human), this protein is 1,4-alpha-glucan-branching enzyme (GBE1).